A 469-amino-acid polypeptide reads, in one-letter code: Putative arginine/ornithine antiporter (469 aa).

A run of 12 helical transmembrane segments spans residues 8 to 28 (GFWLLTAFVVGNMVGSGIFSL), 44 to 64 (AWLLTGAGVLMIALVFGHLSI), 90 to 110 (AGFTMVWGYWVASWISNVAII), 144 to 164 (LTFAVCTILLWGTHAILVASI), 179 to 199 (VLGFVFFIVAGLFVFQTSLFG), 213 to 233 (IGIGGQVHNAAISTLWAFVGI), 254 to 274 (ITGLLIALSIYIIVTLITMGV), 301 to 321 (VIMALLAILCLFGTMLGWILL), 347 to 367 (SPVIALIITNVMSQVFIFSVI), 375 to 395 (FTFLTTAATLAYLIPYLVSAI), 417 to 437 (DGLIAILACAYSVFVIVTGTA), and 439 to 459 (LTTFILGIGLFFVGLIVYPFV).

It belongs to the amino acid-polyamine-organocation (APC) superfamily. Basic amino acid/polyamine antiporter (APA) (TC 2.A.3.2) family.

It is found in the cell membrane. The catalysed reaction is L-ornithine(in) + L-arginine(out) = L-ornithine(out) + L-arginine(in). Catalyzes electroneutral exchange between L-arginine and L-ornithine. In Bacillus subtilis (strain 168), this protein is Putative arginine/ornithine antiporter (yvsH).